Consider the following 263-residue polypeptide: Putative protein JayE (263 aa).

This sequence belongs to the Mu gp47/PBSX XkdT family.

This is Putative protein JayE (jayE) from Escherichia coli (strain K12).